The primary structure comprises 107 residues: Large ribosomal subunit protein uL24 (107 aa).

The protein belongs to the universal ribosomal protein uL24 family. In terms of assembly, part of the 50S ribosomal subunit.

Functionally, one of two assembly initiator proteins, it binds directly to the 5'-end of the 23S rRNA, where it nucleates assembly of the 50S subunit. In terms of biological role, one of the proteins that surrounds the polypeptide exit tunnel on the outside of the subunit. The sequence is that of Large ribosomal subunit protein uL24 from Streptomyces coelicolor (strain ATCC BAA-471 / A3(2) / M145).